A 450-amino-acid chain; its full sequence is UDP-N-acetylmuramoylalanine--D-glutamate ligase (450 aa).

ATP is bound at residue 119–125 (GSNGKTT).

Belongs to the MurCDEF family.

It is found in the cytoplasm. The enzyme catalyses UDP-N-acetyl-alpha-D-muramoyl-L-alanine + D-glutamate + ATP = UDP-N-acetyl-alpha-D-muramoyl-L-alanyl-D-glutamate + ADP + phosphate + H(+). The protein operates within cell wall biogenesis; peptidoglycan biosynthesis. Cell wall formation. Catalyzes the addition of glutamate to the nucleotide precursor UDP-N-acetylmuramoyl-L-alanine (UMA). The chain is UDP-N-acetylmuramoylalanine--D-glutamate ligase from Bacillus cereus (strain B4264).